The following is a 99-amino-acid chain: A-type ATP synthase subunit F (99 aa).

It belongs to the V-ATPase F subunit family. In terms of assembly, has multiple subunits with at least A(3), B(3), C, D, E, F, H, I and proteolipid K(x).

It is found in the cell membrane. Its function is as follows. Component of the A-type ATP synthase that produces ATP from ADP in the presence of a proton gradient across the membrane. The polypeptide is A-type ATP synthase subunit F (Methanococcoides burtonii (strain DSM 6242 / NBRC 107633 / OCM 468 / ACE-M)).